Reading from the N-terminus, the 116-residue chain is MTPLLTLILVVLMGLPLAQALDCHVCAYNGDNCFNPMRCPAMVAYCMTTRTYYTPTRMKVSKSCVPRCFETVYDGYSKHASTTSCCQYDLCNGAGLATPATLALAPILLATLWGLL.

The signal sequence occupies residues 1-20 (MTPLLTLILVVLMGLPLAQA). The UPAR/Ly6 domain occupies 21 to 105 (LDCHVCAYNG…LATPATLALA (85 aa)). Intrachain disulfides connect cysteine 23/cysteine 46, cysteine 26/cysteine 33, cysteine 39/cysteine 64, cysteine 68/cysteine 85, and cysteine 86/cysteine 91. Asparagine 92 is lipidated: GPI-anchor amidated asparagine. A propeptide spans 93–116 (GAGLATPATLALAPILLATLWGLL) (removed in mature form).

Interacts with nAChRs containing alpha-4:beta-2 (CHRNA4:CHRNB2) and alpha-7 (CHRNA7) subunits. Interacts with CHRNA4 probably in the endoplasmic reticulum prior to nAChR pentameric assembly. Interacts with KCNA2/Potassium voltage-gated channel subfamily A member 2.

The protein resides in the cell membrane. The protein localises to the cell projection. Its subcellular location is the dendrite. It is found in the endoplasmic reticulum. Acts in different tissues through interaction to nicotinic acetylcholine receptors (nAChRs). The proposed role as modulator of nAChR activity seems to be dependent on the nAChR subtype and stoichiometry, and to involve an effect on nAChR trafficking and its cell surface expression, and on single channel properties of the nAChR inserted in the plasma membrane. Modulates functional properties of nicotinic acetylcholine receptors (nAChRs) to prevent excessive excitation, and hence neurodegeneration. Enhances desensitization by increasing both the rate and extent of desensitization of alpha-4:beta-2-containing nAChRs and slowing recovery from desensitization. Promotes large amplitude ACh-evoked currents through alpha-4:beta-2 nAChRs. Is involved in regulation of the nAChR pentameric assembly in the endoplasmic reticulum. Shifts stoichiometry from high sensitivity alpha-4(2):beta-2(3) to low sensitivity alpha-4(3):beta-2(2) nAChR. In vitro modulates alpha-3:beta-4-containing nAChRs. Reduces cell surface expression of (alpha-3:beta-4)(2):beta-4 and (alpha-3:beta-4)(2):alpha-5 nAChRs suggesting an interaction with nAChR alpha-3(-):(+)beta-4 subunit interfaces and an allosteric mode. Corresponding single channel effects characterized by decreased unitary conductance, altered burst proportions and enhanced desensitization/inactivation seem to depend on nAChR alpha:alpha subunit interfaces and are greater in (alpha-3:beta-2)(2):alpha-3 when compared to (alpha-3:beta-2)(2):alpha-5 nAChRs. Prevents plasticity in the primary visual cortex late in life. This is Ly-6/neurotoxin-like protein 1 from Pan troglodytes (Chimpanzee).